Here is a 302-residue protein sequence, read N- to C-terminus: GTPase Era (302 aa).

The Era-type G domain occupies 8 to 175 (HSGFVAIIGR…LTTLKGQLPE (168 aa)). The interval 16 to 23 (GRPNVGKS) is G1. Residue 16–23 (GRPNVGKS) participates in GTP binding. The tract at residues 42–46 (QTTRN) is G2. The segment at 63–66 (DTPG) is G3. GTP-binding positions include 63–67 (DTPGI) and 125–128 (NKID). The interval 125–128 (NKID) is G4. The segment at 154–156 (ISA) is G5. Positions 206 to 283 (TRQEVPHSTA…YLELWVKVQE (78 aa)) constitute a KH type-2 domain.

It belongs to the TRAFAC class TrmE-Era-EngA-EngB-Septin-like GTPase superfamily. Era GTPase family. Monomer.

The protein localises to the cytoplasm. The protein resides in the cell membrane. In terms of biological role, an essential GTPase that binds both GDP and GTP, with rapid nucleotide exchange. Plays a role in 16S rRNA processing and 30S ribosomal subunit biogenesis and possibly also in cell cycle regulation and energy metabolism. This chain is GTPase Era, found in Lactiplantibacillus plantarum (strain ATCC BAA-793 / NCIMB 8826 / WCFS1) (Lactobacillus plantarum).